Reading from the N-terminus, the 334-residue chain is uncharacterized protein (334 aa).

A run of 2 helical transmembrane segments spans residues 1-21 (MFRL…FTFI) and 46-66 (ILGL…IIII).

It is found in the cell membrane. This is an uncharacterized protein from Rickettsia prowazekii (strain Madrid E).